We begin with the raw amino-acid sequence, 66 residues long: MKANEIRDLTTAEIEQKVKSLKEELFNLRFQLATGQLENTARIREVRKAIARMKTVIREREIAANK.

Belongs to the universal ribosomal protein uL29 family. Part of the 50S ribosomal subunit.

This is Large ribosomal subunit protein uL29 (rpmC) from Bacillus subtilis (strain 168).